The following is a 266-amino-acid chain: MKRYPTFIKNSILLFYFFFLLILPVVVLFLLIFQNNWHEVLRKATDPIAVSAYLLTVQMAFYAALVNSIFGFIITWVLTRYQFWGREFLDAAVDLPFALPTSVAGLTLATVYGDQGWIGSLFNLFGFQIVFTKIGVLLAMIFVSFPFVIRTLQPVLQEMEKSLEEAAWSLGASSWETFRKVILPTLWPALFTGFTLSFSRALGEFGSIVMISSNLPFKDLVASVLIYQSLEQYDYLGASVIGAVVLLIALFTLLLINAFQIMKFRV.

A run of 7 helical transmembrane segments spans residues Ile-12–Ile-32, Met-59–Thr-79, Ala-91–Val-111, Ile-129–Ile-149, Val-181–Ala-201, Gly-206–Ile-226, and Leu-236–Ile-256. The 205-residue stretch at Tyr-53–Asn-257 folds into the ABC transmembrane type-1 domain.

The protein belongs to the binding-protein-dependent transport system permease family. CysTW subfamily.

Its subcellular location is the plastid. The protein localises to the chloroplast membrane. Its function is as follows. Part of the ABC transporter complex cysAWTP (TC 3.A.1.6.1) involved in sulfate/thiosulfate import. Probably responsible for the translocation of the substrate across the membrane. This chain is Probable sulfate transport system permease protein cysT (cysT), found in Chlorella vulgaris (Green alga).